The following is a 76-amino-acid chain: Small nuclear ribonucleoprotein G (76 aa).

In terms of domain architecture, Sm spans 4–76 (AHPPELKKFM…IIMLEALERV (73 aa)).

The protein belongs to the snRNP Sm proteins family. In terms of assembly, core component of the spliceosomal U1, U2, U4 and U5 small nuclear ribonucleoproteins (snRNPs), the building blocks of the spliceosome. Most spliceosomal snRNPs contain a common set of Sm proteins, SNRPB, SNRPD1, SNRPD2, SNRPD3, SNRPE, SNRPF and SNRPG that assemble in a heptameric protein ring on the Sm site of the small nuclear RNA to form the core snRNP. Component of the U1 snRNP. The U1 snRNP is composed of the U1 snRNA and the 7 core Sm proteins SNRPB, SNRPD1, SNRPD2, SNRPD3, SNRPE, SNRPF and SNRPG, and at least three U1 snRNP-specific proteins SNRNP70/U1-70K, SNRPA/U1-A and SNRPC/U1-C. Component of the U4/U6-U5 tri-snRNP complex composed of the U4, U6 and U5 snRNAs and at least PRPF3, PRPF4, PRPF6, PRPF8, PRPF31, SNRNP200, TXNL4A, SNRNP40, SNRPB, SNRPD1, SNRPD2, SNRPD3, SNRPE, SNRPF, SNRPG, DDX23, CD2BP2, PPIH, SNU13, EFTUD2, SART1 and USP39, plus LSM2, LSM3, LSM4, LSM5, LSM6, LSM7 and LSM8. Component of the U7 snRNP complex, or U7 Sm protein core complex, that is composed of the U7 snRNA and at least LSM10, LSM11, SNRPB, SNRPD3, SNRPE, SNRPF and SNRPG; the complex does not contain SNRPD1 and SNRPD2. Component of the minor spliceosome, which splices U12-type introns. Part of the SMN-Sm complex that contains SMN1, GEMIN2/SIP1, DDX20/GEMIN3, GEMIN4, GEMIN5, GEMIN6, GEMIN7, GEMIN8, STRAP/UNRIP and the Sm proteins SNRPB, SNRPD1, SNRPD2, SNRPD3, SNRPE, SNRPF and SNRPG; catalyzes core snRNPs assembly. Forms a 6S pICln-Sm complex composed of CLNS1A/pICln, SNRPD1, SNRPD2, SNRPE, SNRPF and SNRPG; ring-like structure where CLNS1A/pICln mimics additional Sm proteins and which is unable to assemble into the core snRNP. Interacts with GEMIN2 (via N-terminus); the interaction is direct. Interacts with SNRPE; the interaction is direct.

The protein resides in the cytoplasm. Its subcellular location is the cytosol. The protein localises to the nucleus. In terms of biological role, plays a role in pre-mRNA splicing as a core component of the spliceosomal U1, U2, U4 and U5 small nuclear ribonucleoproteins (snRNPs), the building blocks of the spliceosome. Component of both the pre-catalytic spliceosome B complex and activated spliceosome C complexes. As a component of the minor spliceosome, involved in the splicing of U12-type introns in pre-mRNAs. As part of the U7 snRNP it is involved in histone 3'-end processing. This is Small nuclear ribonucleoprotein G (SNRPG) from Bos taurus (Bovine).